Reading from the N-terminus, the 57-residue chain is UPF0434 protein Shal_2504 (57 aa).

The protein belongs to the UPF0434 family.

The polypeptide is UPF0434 protein Shal_2504 (Shewanella halifaxensis (strain HAW-EB4)).